We begin with the raw amino-acid sequence, 111 residues long: Mitochondrial import inner membrane translocase subunit TIM14 (111 aa).

Over 1 to 3 (MTG) the chain is Mitochondrial intermembrane. A helical membrane pass occupies residues 4–24 (GLIAAGLGLAAVGFGARYVLR). Over 25-111 (NQALIKKGME…AKDLMESTKS (87 aa)) the chain is Mitochondrial matrix. Positions 58–111 (EAAKILGITPSAKPAKIKDAHKKVMIVNHPDRGGSPYLAAKINEAKDLMESTKS) constitute a J domain.

This sequence belongs to the TIM14 family. As to quaternary structure, probable component of the PAM complex at least composed of a mitochondrial HSP70 protein, GrpE, tim-44, tim-16 and tim-14.

Its subcellular location is the mitochondrion inner membrane. Functionally, probable component of the PAM complex, a complex required for the translocation of transit peptide-containing proteins from the inner membrane into the mitochondrial matrix in an ATP-dependent manner. May act as a co-chaperone that stimulate the ATP-dependent activity. The protein is Mitochondrial import inner membrane translocase subunit TIM14 (dnj-21) of Caenorhabditis briggsae.